Reading from the N-terminus, the 362-residue chain is Protein MGF 360-2L (362 aa).

The protein belongs to the asfivirus MGF 360 family.

Plays a role in virus cell tropism, and may be required for efficient virus replication in macrophages. The protein is Protein MGF 360-2L of African swine fever virus (strain Badajoz 1971 Vero-adapted) (Ba71V).